A 788-amino-acid polypeptide reads, in one-letter code: uncharacterized protein (788 aa).

In terms of domain architecture, Adrift-type SAM-dependent 2'-O-MTase spans 485 to 693; that stretch reads EMITTAWIKL…IYIVLKSYKG (209 aa). S-adenosyl-L-methionine contacts are provided by Gly521 and Asp604. Lys645 (proton acceptor) is an active-site residue.

This is an uncharacterized protein from Acanthamoeba polyphaga (Amoeba).